Here is a 166-residue protein sequence, read N- to C-terminus: Endoribonuclease YbeY (166 aa).

Residues His132, His136, and His142 each contribute to the Zn(2+) site.

The protein belongs to the endoribonuclease YbeY family. Zn(2+) is required as a cofactor.

It is found in the cytoplasm. Its function is as follows. Single strand-specific metallo-endoribonuclease involved in late-stage 70S ribosome quality control and in maturation of the 3' terminus of the 16S rRNA. In Clostridium botulinum (strain Eklund 17B / Type B), this protein is Endoribonuclease YbeY.